The primary structure comprises 360 residues: MLYFLSELTAQVSALNVFRYLTFRTGGAVMTAMLVAFVFGPGIIEWLKRKQGEGQPIRSDGPESHLTKKGTPTMGGIMILLGVGVATLLWADLSKGYVWAVLLLTLGYGAIGFADDYLKLTKRNTKGLSGRLKLVAQVGMAVIAGLWIMLLGQGDQASSLALPFFKDLTFNLGWFYLPFAAFVMVGASNAVNLTDGLDGLAIVPVMIAAGVFMLIAYLVGNIIFSNYLQIQHVPGTGELAVFCGAIVGAAVGFLWFNAPPAMVFMGDTGSLALGGALGAVSVVTKHEIVLAIVGGLFVLETVSVIVQVASFKLTGKRVFRMAPLHHHFEKKGWAEPTVVIRFWIIAMILAIVGLSTLKLR.

10 helical membrane-spanning segments follow: residues 27-47 (GAVM…IEWL), 73-93 (TMGG…WADL), 98-118 (VWAV…DDYL), 134-154 (LVAQ…LGQG), 168-188 (LTFN…VGAS), 199-219 (GLAI…AYLV), 239-259 (LAVF…FNAP), 263-283 (VFMG…VSVV), 288-308 (IVLA…IVQV), and 337-357 (TVVI…LSTL).

The protein belongs to the glycosyltransferase 4 family. MraY subfamily. Mg(2+) is required as a cofactor.

It localises to the cell inner membrane. It catalyses the reaction UDP-N-acetyl-alpha-D-muramoyl-L-alanyl-gamma-D-glutamyl-meso-2,6-diaminopimeloyl-D-alanyl-D-alanine + di-trans,octa-cis-undecaprenyl phosphate = di-trans,octa-cis-undecaprenyl diphospho-N-acetyl-alpha-D-muramoyl-L-alanyl-D-glutamyl-meso-2,6-diaminopimeloyl-D-alanyl-D-alanine + UMP. It functions in the pathway cell wall biogenesis; peptidoglycan biosynthesis. In terms of biological role, catalyzes the initial step of the lipid cycle reactions in the biosynthesis of the cell wall peptidoglycan: transfers peptidoglycan precursor phospho-MurNAc-pentapeptide from UDP-MurNAc-pentapeptide onto the lipid carrier undecaprenyl phosphate, yielding undecaprenyl-pyrophosphoryl-MurNAc-pentapeptide, known as lipid I. This chain is Phospho-N-acetylmuramoyl-pentapeptide-transferase, found in Rhodospirillum rubrum (strain ATCC 11170 / ATH 1.1.1 / DSM 467 / LMG 4362 / NCIMB 8255 / S1).